A 335-amino-acid polypeptide reads, in one-letter code: UPF0065 protein BB4329 (335 aa).

Residues 1–39 (MNKNIPAFHRRCHGLVQGLARTLLLAPVLLALSVPAAQA) form the signal peptide.

The protein belongs to the UPF0065 (bug) family.

The protein resides in the periplasm. The chain is UPF0065 protein BB4329 from Bordetella bronchiseptica (strain ATCC BAA-588 / NCTC 13252 / RB50) (Alcaligenes bronchisepticus).